Consider the following 101-residue polypeptide: Large ribosomal subunit protein bL28 (101 aa).

This sequence belongs to the bacterial ribosomal protein bL28 family.

This is Large ribosomal subunit protein bL28 from Rhodopseudomonas palustris (strain ATCC BAA-98 / CGA009).